A 261-amino-acid chain; its full sequence is Small ribosomal subunit protein uS2 (261 aa).

Position 2 is an N-acetylserine (S2). The segment at 215–261 (AEEAKTTEDVEEAAPVDADEWTGETEEVDWAESGATPAVEDAAASNW) is disordered. Residues 223 to 244 (DVEEAAPVDADEWTGETEEVDW) show a composition bias toward acidic residues.

The protein belongs to the universal ribosomal protein uS2 family. Component of the small ribosomal subunit. Mature ribosomes consist of a small (40S) and a large (60S) subunit. The 40S subunit contains about 33 different proteins and 1 molecule of RNA (18S). The 60S subunit contains about 49 different proteins and 3 molecules of RNA (25S, 5.8S and 5S). Interacts with RPS21.

It localises to the cytoplasm. Its function is as follows. Required for the assembly and/or stability of the 40S ribosomal subunit. Required for the processing of the 20S rRNA-precursor to mature 18S rRNA in a late step of the maturation of 40S ribosomal subunits. The chain is Small ribosomal subunit protein uS2 from Scheffersomyces stipitis (strain ATCC 58785 / CBS 6054 / NBRC 10063 / NRRL Y-11545) (Yeast).